The chain runs to 61 residues: Chromatin protein Cren7 (61 aa).

This sequence belongs to the Cren7 family. As to quaternary structure, monomer. In terms of processing, methylated at multiple sites, to varying extents.

The protein resides in the chromosome. It is found in the cytoplasm. A chromatin protein, binds double-stranded DNA without sequence specificity. Constrains negative DNA supercoils. In Caldivirga maquilingensis (strain ATCC 700844 / DSM 13496 / JCM 10307 / IC-167), this protein is Chromatin protein Cren7.